A 293-amino-acid polypeptide reads, in one-letter code: 33 kDa chaperonin (293 aa).

Disulfide bonds link Cys236/Cys238 and Cys269/Cys272.

This sequence belongs to the HSP33 family. In terms of processing, under oxidizing conditions two disulfide bonds are formed involving the reactive cysteines. Under reducing conditions zinc is bound to the reactive cysteines and the protein is inactive.

It localises to the cytoplasm. Redox regulated molecular chaperone. Protects both thermally unfolding and oxidatively damaged proteins from irreversible aggregation. Plays an important role in the bacterial defense system toward oxidative stress. The polypeptide is 33 kDa chaperonin (Lactobacillus delbrueckii subsp. bulgaricus (strain ATCC BAA-365 / Lb-18)).